Here is a 292-residue protein sequence, read N- to C-terminus: Peroxisomal 2,4-dienoyl-CoA reductase [(3E)-enoyl-CoA-producing] (292 aa).

NADP(+)-binding positions include 35-40 (GGGSGI), 60-64 (RSLPR), and D86. Substrate is bound at residue R60. Residues R88, F118, and 126-128 (SFN) contribute to the substrate site. K151 bears the N6-acetyllysine mark. NADP(+)-binding positions include K182 and 208–214 (PGAISGT). Residue R219 participates in substrate binding. S287 is subject to Phosphoserine. The Microbody targeting signal motif lies at 290–292 (AKL). K291 carries the post-translational modification N6-acetyllysine.

The protein belongs to the short-chain dehydrogenases/reductases (SDR) family. 2,4-dienoyl-CoA reductase subfamily. Monomer, dimer and oligomer.

Its subcellular location is the peroxisome. The catalysed reaction is a (2E,4Z)-dienoyl-CoA + NADPH + H(+) = a 4,5-saturated-(3E)-enoyl-CoA + NADP(+). It carries out the reaction a (2E,4E)-dienoyl-CoA + NADPH + H(+) = a 4,5-saturated-(3E)-enoyl-CoA + NADP(+). It catalyses the reaction (2E,4E)-hexadienoyl-CoA + NADPH + H(+) = (3E)-hexenoyl-CoA + NADP(+). The enzyme catalyses (2E,4E)-decadienoyl-CoA + NADPH + H(+) = (3E)-decenoyl-CoA + NADP(+). The catalysed reaction is (2E,4Z,7Z,10Z,13Z,16Z,19Z)-docosaheptaenoyl-CoA + NADPH + H(+) = (3E,7Z,10Z,13Z,16Z,19Z)-docosahexaenoyl-CoA + NADP(+). Functionally, auxiliary enzyme of beta-oxidation. Participates in the degradation of unsaturated fatty enoyl-CoA esters having double bonds in both even- and odd-numbered positions in peroxisome. Catalyzes the NADP-dependent reduction of 2,4-dienoyl-CoA to yield trans-3-enoyl-CoA. Has activity towards short and medium chain 2,4-dienoyl-CoAs, but also towards 2,4,7,10,13,16,19-docosaheptaenoyl-CoA, suggesting that it does not constitute a rate limiting step in the peroxisomal degradation of docosahexaenoic acid. The polypeptide is Peroxisomal 2,4-dienoyl-CoA reductase [(3E)-enoyl-CoA-producing] (Decr2) (Rattus norvegicus (Rat)).